Reading from the N-terminus, the 357-residue chain is 3-isopropylmalate dehydrogenase (357 aa).

76–89 (GPKWDALDSNIRPE) is an NAD(+) binding site. Substrate-binding residues include arginine 96, arginine 106, arginine 134, and aspartate 224. Mg(2+) is bound by residues aspartate 224, aspartate 248, and aspartate 252. An NAD(+)-binding site is contributed by 282 to 294 (GSAPDIAGQGVAN).

The protein belongs to the isocitrate and isopropylmalate dehydrogenases family. LeuB type 1 subfamily. As to quaternary structure, homodimer. Mg(2+) is required as a cofactor. The cofactor is Mn(2+).

The protein resides in the cytoplasm. The enzyme catalyses (2R,3S)-3-isopropylmalate + NAD(+) = 4-methyl-2-oxopentanoate + CO2 + NADH. It participates in amino-acid biosynthesis; L-leucine biosynthesis; L-leucine from 3-methyl-2-oxobutanoate: step 3/4. Catalyzes the oxidation of 3-carboxy-2-hydroxy-4-methylpentanoate (3-isopropylmalate) to 3-carboxy-4-methyl-2-oxopentanoate. The product decarboxylates to 4-methyl-2 oxopentanoate. This chain is 3-isopropylmalate dehydrogenase, found in Saccharophagus degradans (strain 2-40 / ATCC 43961 / DSM 17024).